The primary structure comprises 145 residues: UPF0179 protein MmarC7_0952 (145 aa).

The protein belongs to the UPF0179 family.

The protein is UPF0179 protein MmarC7_0952 of Methanococcus maripaludis (strain C7 / ATCC BAA-1331).